The primary structure comprises 549 residues: Probable chaperonin-like protein PrmG (549 aa).

The protein belongs to the chaperonin (HSP60) family.

Functionally, probably plays an essential role in the productive folding of PrmA, and thus in the formation of the active PrmABCD complex. This chain is Probable chaperonin-like protein PrmG (prmG), found in Rhodococcus jostii (strain RHA1).